A 60-amino-acid chain; its full sequence is Large ribosomal subunit protein bL32 (60 aa).

The protein belongs to the bacterial ribosomal protein bL32 family.

The chain is Large ribosomal subunit protein bL32 from Latilactobacillus sakei subsp. sakei (strain 23K) (Lactobacillus sakei subsp. sakei).